Reading from the N-terminus, the 44-residue chain is Photosystem I reaction center subunit IX (44 aa).

A helical membrane pass occupies residues 7 to 27 (YLSTAPVLAILCVSFLAALLI).

This sequence belongs to the PsaJ family.

It localises to the plastid. The protein localises to the chloroplast thylakoid membrane. May help in the organization of the PsaE and PsaF subunits. The chain is Photosystem I reaction center subunit IX from Pinus thunbergii (Japanese black pine).